Here is a 512-residue protein sequence, read N- to C-terminus: GMP synthase [glutamine-hydrolyzing] (512 aa).

A Glutamine amidotransferase type-1 domain is found at 9-198 (GVLVVDFGGQ…WLSLVGAPRT (190 aa)). Cys87 (nucleophile) is an active-site residue. Residues His173 and Glu175 contribute to the active site. One can recognise a GMPS ATP-PPase domain in the interval 199–387 (WRPGDMVSEL…LGVPRELIWK (189 aa)). 226 to 232 (SGGVDST) is a binding site for ATP.

The enzyme catalyses XMP + L-glutamine + ATP + H2O = GMP + L-glutamate + AMP + diphosphate + 2 H(+). The protein operates within purine metabolism; GMP biosynthesis; GMP from XMP (L-Gln route): step 1/1. Its function is as follows. Catalyzes the synthesis of GMP from XMP. This chain is GMP synthase [glutamine-hydrolyzing] (guaA), found in Aeropyrum pernix (strain ATCC 700893 / DSM 11879 / JCM 9820 / NBRC 100138 / K1).